Here is a 245-residue protein sequence, read N- to C-terminus: MAGHSHWAGIKHKKGANDAARGKIFQKMFKEIYVAATGPGGTDPSSNPALRLAISKAKAKSMPKANIERALDKAKGNAKDGAVFTEIIYNATISGGATFLVITLSDNVNRTTSNIQSYFNKQNAKLGKTGTIPFQFDHKGIMEISKSLVDEESLTIVCLENGAEDIEATDESFIITTSVEDFSTCKSAIESNLNITEFMQCEITYLPNATVTFTGEKAQKIQDFIAKLEDDDDVQEVFHNIEFEE.

The protein belongs to the TACO1 family.

It localises to the cytoplasm. This is Probable transcriptional regulatory protein MAG6590 from Mycoplasmopsis agalactiae (strain NCTC 10123 / CIP 59.7 / PG2) (Mycoplasma agalactiae).